The chain runs to 384 residues: Tryptophan--tRNA ligase (384 aa).

The 'HIGH' region signature appears at 81–89; the sequence is PSGPMHIGH. The short motif at 252–256 is the 'KMSKS' region element; sequence KMSAS.

This sequence belongs to the class-I aminoacyl-tRNA synthetase family.

Its subcellular location is the cytoplasm. It catalyses the reaction tRNA(Trp) + L-tryptophan + ATP = L-tryptophyl-tRNA(Trp) + AMP + diphosphate + H(+). This Thermococcus kodakarensis (strain ATCC BAA-918 / JCM 12380 / KOD1) (Pyrococcus kodakaraensis (strain KOD1)) protein is Tryptophan--tRNA ligase.